A 140-amino-acid chain; its full sequence is Flagellar assembly factor FliW (140 aa).

Belongs to the FliW family. Interacts with translational regulator CsrA and flagellin(s).

It localises to the cytoplasm. Its function is as follows. Acts as an anti-CsrA protein, binds CsrA and prevents it from repressing translation of its target genes, one of which is flagellin. Binds to flagellin and participates in the assembly of the flagellum. The polypeptide is Flagellar assembly factor FliW (Syntrophotalea carbinolica (strain DSM 2380 / NBRC 103641 / GraBd1) (Pelobacter carbinolicus)).